Reading from the N-terminus, the 63-residue chain is High-potential iron-sulfur protein (63 aa).

Cys-23, Cys-26, Cys-41, and Cys-56 together coordinate [4Fe-4S] cluster.

This sequence belongs to the high-potential iron-sulfur protein (HiPIP) family. As to quaternary structure, homodimer.

In terms of biological role, specific class of high-redox-potential 4Fe-4S ferredoxins. Functions in anaerobic electron transport in most purple and in some other photosynthetic bacteria and in at least one genus (Paracoccus) of halophilic, denitrifying bacteria. The sequence is that of High-potential iron-sulfur protein (hip) from Rhodocyclus tenuis (Rhodospirillum tenue).